A 272-amino-acid chain; its full sequence is Type III pantothenate kinase (272 aa).

6–13 lines the ATP pocket; the sequence is DVRNTHTV. 109–112 is a substrate binding site; that stretch reads GADR. D111 functions as the Proton acceptor in the catalytic mechanism. A K(+)-binding site is contributed by D131. ATP is bound at residue S134. T186 contacts substrate.

It belongs to the type III pantothenate kinase family. In terms of assembly, homodimer. NH4(+) serves as cofactor. K(+) is required as a cofactor.

The protein resides in the cytoplasm. The catalysed reaction is (R)-pantothenate + ATP = (R)-4'-phosphopantothenate + ADP + H(+). The protein operates within cofactor biosynthesis; coenzyme A biosynthesis; CoA from (R)-pantothenate: step 1/5. Its function is as follows. Catalyzes the phosphorylation of pantothenate (Pan), the first step in CoA biosynthesis. The protein is Type III pantothenate kinase of Mycobacterium marinum (strain ATCC BAA-535 / M).